The primary structure comprises 260 residues: 3'-5' ssDNA/RNA exonuclease TatD (260 aa).

A divalent metal cation is bound by residues Glu91, His127, and His152.

This sequence belongs to the metallo-dependent hydrolases superfamily. TatD-type hydrolase family. TatD subfamily. As to quaternary structure, monomer. The cofactor is Mg(2+).

It localises to the cytoplasm. Functionally, 3'-5' exonuclease that prefers single-stranded DNA and RNA. May play a role in the H(2)O(2)-induced DNA damage repair. This chain is 3'-5' ssDNA/RNA exonuclease TatD, found in Enterobacter sp. (strain 638).